Reading from the N-terminus, the 276-residue chain is MTRPIRHQYEDLMRLVATQGAFKADRTGTGTKSVFGHQMRFDLNEGFPLVTTKKVHLKSIIQELLWFLTGSSSNHWLTERGVTIWNEWARADGDLGPVYGVQWRSWPTPDGGHIDQIAEVIKTLKTNPDSRRIIVSAWNVADLDKMALMPCHALFQFYVAPATEAGGKGKLSCQLYQRSADIFLGVPFNIASYALLTHMVAQQCDLDVGDFIWTGGDCHIYSNHQEQVALQLGRAPFAYPLLHIRRKPDSIFDYQFEDFEFLDYQHHPAIKAPVAV.

Residue Arg-26 coordinates dUMP. His-56 contributes to the (6R)-5,10-methylene-5,6,7,8-tetrahydrofolate binding site. 131-132 contributes to the dUMP binding site; it reads RR. Cys-151 functions as the Nucleophile in the catalytic mechanism. Residues 178–181, Asn-189, and 219–221 each bind dUMP; these read RSAD and HIY. Residue Asp-181 participates in (6R)-5,10-methylene-5,6,7,8-tetrahydrofolate binding. Ala-275 is a (6R)-5,10-methylene-5,6,7,8-tetrahydrofolate binding site.

It belongs to the thymidylate synthase family. Bacterial-type ThyA subfamily. As to quaternary structure, homodimer.

Its subcellular location is the cytoplasm. The enzyme catalyses dUMP + (6R)-5,10-methylene-5,6,7,8-tetrahydrofolate = 7,8-dihydrofolate + dTMP. Its pathway is pyrimidine metabolism; dTTP biosynthesis. Its function is as follows. Catalyzes the reductive methylation of 2'-deoxyuridine-5'-monophosphate (dUMP) to 2'-deoxythymidine-5'-monophosphate (dTMP) while utilizing 5,10-methylenetetrahydrofolate (mTHF) as the methyl donor and reductant in the reaction, yielding dihydrofolate (DHF) as a by-product. This enzymatic reaction provides an intracellular de novo source of dTMP, an essential precursor for DNA biosynthesis. This Polaromonas naphthalenivorans (strain CJ2) protein is Thymidylate synthase.